The chain runs to 277 residues: Shikimate dehydrogenase (NADP(+)) (277 aa).

Residues 15 to 17 (SLS) and Thr62 each bind shikimate. Catalysis depends on Lys66, which acts as the Proton acceptor. Positions 87 and 102 each coordinate shikimate. Residues 127–131 (GAGGA), 151–156 (NRTVDK), and Ile219 each bind NADP(+). Tyr221 is a shikimate binding site. Gly242 lines the NADP(+) pocket.

It belongs to the shikimate dehydrogenase family. In terms of assembly, homodimer.

It catalyses the reaction shikimate + NADP(+) = 3-dehydroshikimate + NADPH + H(+). The protein operates within metabolic intermediate biosynthesis; chorismate biosynthesis; chorismate from D-erythrose 4-phosphate and phosphoenolpyruvate: step 4/7. In terms of biological role, involved in the biosynthesis of the chorismate, which leads to the biosynthesis of aromatic amino acids. Catalyzes the reversible NADPH linked reduction of 3-dehydroshikimate (DHSA) to yield shikimate (SA). The sequence is that of Shikimate dehydrogenase (NADP(+)) from Bacillus anthracis (strain CDC 684 / NRRL 3495).